The following is a 365-amino-acid chain: Casein kinase I homolog hhp1 (365 aa).

The Protein kinase domain maps to 11-279 (YRIGRKIGSG…YLRKLFRDLF (269 aa)). Residues 17–25 (IGSGSFGDI) and Lys-40 contribute to the ATP site. Catalysis depends on Asp-130, which acts as the Proton acceptor. A compositionally biased stretch (low complexity) spans 301–311 (DQQHQQQLQQQ). Residues 301–365 (DQQHQQQLQQ…TGAQYINRPN (65 aa)) form a disordered region. A compositionally biased stretch (polar residues) spans 343–365 (INTTVPVINDPSATGAQYINRPN).

Belongs to the protein kinase superfamily. CK1 Ser/Thr protein kinase family. Casein kinase I subfamily.

It localises to the nucleus. It catalyses the reaction L-seryl-[protein] + ATP = O-phospho-L-seryl-[protein] + ADP + H(+). The catalysed reaction is L-threonyl-[protein] + ATP = O-phospho-L-threonyl-[protein] + ADP + H(+). Involved in DNA repair. Has a probable role in repairing alkylated DNA and may regulate the activity of protein(s) involved in double strand break repair caused by gamma rays. The sequence is that of Casein kinase I homolog hhp1 (hhp1) from Schizosaccharomyces pombe (strain 972 / ATCC 24843) (Fission yeast).